We begin with the raw amino-acid sequence, 300 residues long: 2-methylisocitrate lyase (300 aa).

53 to 55 (SGD) lines the substrate pocket. Mg(2+) contacts are provided by Asp92 and Asp94. Substrate-binding positions include 129–130 (CG), Arg162, Glu192, 214–216 (NMT), Arg245, and Arg274.

It belongs to the isocitrate lyase/PEP mutase superfamily. Methylisocitrate lyase family. Mg(2+) is required as a cofactor.

The enzyme catalyses 3-hydroxybutane-1,2,3-tricarboxylate = pyruvate + succinate. In terms of biological role, involved in the methylcitric acid cycle. Catalyzes the cleavage of 2-methylisocitrate to yield pyruvate and succinate. In Halalkalibacterium halodurans (strain ATCC BAA-125 / DSM 18197 / FERM 7344 / JCM 9153 / C-125) (Bacillus halodurans), this protein is 2-methylisocitrate lyase.